The following is a 513-amino-acid chain: ATP synthase subunit alpha (513 aa).

169-176 is an ATP binding site; it reads GDRQTGKT.

It belongs to the ATPase alpha/beta chains family. As to quaternary structure, F-type ATPases have 2 components, CF(1) - the catalytic core - and CF(0) - the membrane proton channel. CF(1) has five subunits: alpha(3), beta(3), gamma(1), delta(1), epsilon(1). CF(0) has three main subunits: a(1), b(2) and c(9-12). The alpha and beta chains form an alternating ring which encloses part of the gamma chain. CF(1) is attached to CF(0) by a central stalk formed by the gamma and epsilon chains, while a peripheral stalk is formed by the delta and b chains.

The protein localises to the cell inner membrane. The enzyme catalyses ATP + H2O + 4 H(+)(in) = ADP + phosphate + 5 H(+)(out). In terms of biological role, produces ATP from ADP in the presence of a proton gradient across the membrane. The alpha chain is a regulatory subunit. The polypeptide is ATP synthase subunit alpha (Salmonella agona (strain SL483)).